Here is a 133-residue protein sequence, read N- to C-terminus: Profilin-2 (133 aa).

It belongs to the profilin family. Occurs in many kinds of cells as a complex with monomeric actin in a 1:1 ratio.

The protein resides in the cytoplasm. It localises to the cytoskeleton. In terms of biological role, binds to actin and affects the structure of the cytoskeleton. At high concentrations, profilin prevents the polymerization of actin, whereas it enhances it at low concentrations. By binding to PIP2, it inhibits the formation of IP3 and DG. The sequence is that of Profilin-2 from Artemisia vulgaris (Mugwort).